A 594-amino-acid polypeptide reads, in one-letter code: MMETPNNDSSRTPDEAAGAPDPESARYVANELSVADRQVNILRDKLRHIDRQLAAATQNNSKLVGMLETAKAEILRLKNALDQEGQPPYSFGTILQLNPKRQPTAGNSGQAATEESVDIFNAGRKMRVGVSPLVNMNQLAVGQEVLLNEALLVVAGLGYERAGELVTLKEMLGTDRALVVGRADEERVIRLSGALMSEKLRVGDALSIDSRTGYALEKVPRSEVENLVLEEVPDITYEDIGGLGPQIEQIRDAVELPFLHPDLYREHGLKAPKGILLYGPPGCGKTLIAKAVANSLAARAAERTGNVDLKSYFLNIKGPELLDKYVGETERHIRLIFSRAREKASDGSPVVVFFDEMDSLFRTRGTGISSDVETTIVPQLLSEIDGVERLDNVIVIGASNREDMIDPAILRPGRLDVKVKIQRPDAEAAADIFYKYITTDLPFHESDLAEHSGDVQATVDAMIQRTVEAMYSTEKSNEYLEVTYANGDTEMLYFKDFNSGAVVQNVVDRAKKYAIKDLLTTQQKGLRIDHLLRAVVDEFREHEDMPNTTNPDDWARISGKKGERITYIRTIVQGKAGQEPGKSIETMPSTGQYL.

The segment covering 1 to 10 (MMETPNNDSS) has biased composition (polar residues). Residues 1-23 (MMETPNNDSSRTPDEAAGAPDPE) are disordered. Residues 35-86 (ADRQVNILRDKLRHIDRQLAAATQNNSKLVGMLETAKAEILRLKNALDQEGQ) adopt a coiled-coil conformation. Residue 282–287 (GCGKTL) participates in ATP binding. The interval 593–594 (YL) is docks into pockets in the proteasome alpha-ring.

Belongs to the AAA ATPase family. As to quaternary structure, homohexamer. Assembles into a hexameric ring structure that caps the 20S proteasome core. Strongly interacts with the prokaryotic ubiquitin-like protein Pup through a hydrophobic interface; the interacting region of ARC lies in its N-terminal coiled-coil domain. There is one Pup binding site per ARC hexamer ring. Upon ATP-binding, the C-terminus of ARC interacts with the alpha-rings of the proteasome core, possibly by binding to the intersubunit pockets.

Its pathway is protein degradation; proteasomal Pup-dependent pathway. Functionally, ATPase which is responsible for recognizing, binding, unfolding and translocation of pupylated proteins into the bacterial 20S proteasome core particle. May be essential for opening the gate of the 20S proteasome via an interaction with its C-terminus, thereby allowing substrate entry and access to the site of proteolysis. Thus, the C-termini of the proteasomal ATPase may function like a 'key in a lock' to induce gate opening and therefore regulate proteolysis. The protein is Proteasome-associated ATPase of Arthrobacter sp. (strain FB24).